A 516-amino-acid chain; its full sequence is Prolyl 4-hydroxylase subunit alpha-1 (516 aa).

N97 carries N-linked (GlcNAc...) asparagine glycosylation. The stretch at 189-222 (VYILDYLSYAVYQQGDLSKAMMLTKRLLELDPEH) is one TPR repeat. N243 carries N-linked (GlcNAc...) asparagine glycosylation. Positions 393–501 (TAEELQVANY…KWVSNKWLHE (109 aa)) constitute a Fe2OG dioxygenase domain. Fe cation is bound by residues H411, D413, and H482. K492 is a 2-oxoglutarate binding site.

The protein belongs to the P4HA family. Heterotetramer of two alpha chains and two beta chains (the beta chain is the multi-functional PDI). Fe(2+) serves as cofactor. L-ascorbate is required as a cofactor.

The protein resides in the endoplasmic reticulum lumen. The enzyme catalyses L-prolyl-[collagen] + 2-oxoglutarate + O2 = trans-4-hydroxy-L-prolyl-[collagen] + succinate + CO2. Its function is as follows. Catalyzes the post-translational formation of 4-hydroxyproline in -Xaa-Pro-Gly- sequences in collagens and other proteins. The polypeptide is Prolyl 4-hydroxylase subunit alpha-1 (P4HA1) (Gallus gallus (Chicken)).